A 58-amino-acid polypeptide reads, in one-letter code: Preprotein translocase subunit SecG (58 aa).

Over M1–S33 the chain is Cytoplasmic. The chain crosses the membrane as a helical span at residues P34–L55. Residues P56–P58 lie on the Extracellular side of the membrane.

This sequence belongs to the SEC61-beta family. In terms of assembly, component of the protein translocase complex. Heterotrimer consisting of alpha (SecY), beta (SecG) and gamma (SecE) subunits. Can form oligomers of the heterotrimer.

It localises to the cell membrane. In terms of biological role, involved in protein export. The function of the beta subunit is unknown, but it may be involved in stabilization of the trimeric complex. The polypeptide is Preprotein translocase subunit SecG (Pyrobaculum calidifontis (strain DSM 21063 / JCM 11548 / VA1)).